Reading from the N-terminus, the 353-residue chain is Probable butyrate kinase (353 aa).

Belongs to the acetokinase family.

It is found in the cytoplasm. It carries out the reaction butanoate + ATP = butanoyl phosphate + ADP. This Bacteroides thetaiotaomicron (strain ATCC 29148 / DSM 2079 / JCM 5827 / CCUG 10774 / NCTC 10582 / VPI-5482 / E50) protein is Probable butyrate kinase.